Reading from the N-terminus, the 165-residue chain is V-type proton ATPase 16 kDa proteolipid subunit (165 aa).

The Lumenal segment spans residues M1–T10. Residues A11–G33 traverse the membrane as a helical segment. At T34–S55 the chain is on the cytoplasmic side. The chain crosses the membrane as a helical span at residues I56 to I76. At S77–H95 the chain is on the lumenal side. A helical transmembrane segment spans residues L96 to G117. At D118 to K129 the chain is on the cytoplasmic side. The chain crosses the membrane as a helical span at residues L130–L155. The Lumenal segment spans residues S156 to D165.

It belongs to the V-ATPase proteolipid subunit family. V-ATPase is a heteromultimeric enzyme composed of a peripheral catalytic V1 complex (main components: subunits A, B, C, D, E, and F) attached to an integral membrane V0 proton pore complex (main component: the proteolipid protein; which is present as a hexamer that forms the proton-conducting pore).

It is found in the vacuole membrane. In terms of biological role, proton-conducting pore forming subunit of the membrane integral V0 complex of vacuolar ATPase. V-ATPase is responsible for acidifying a variety of intracellular compartments in eukaryotic cells. In Oryza sativa subsp. indica (Rice), this protein is V-type proton ATPase 16 kDa proteolipid subunit (VATP-P1).